Reading from the N-terminus, the 632-residue chain is Extracellular metalloproteinase 5 (632 aa).

A signal peptide spans M1–H20. Residues P21–A244 constitute a propeptide that is removed on maturation. N284 is a glycosylation site (N-linked (GlcNAc...) asparagine). H427 contacts Zn(2+). E428 is an active-site residue. Zn(2+) is bound at residue H431. N-linked (GlcNAc...) asparagine glycosylation is found at N591 and N620.

Belongs to the peptidase M36 family. Zn(2+) serves as cofactor.

It localises to the secreted. Secreted metalloproteinase probably acting as a virulence factor. This chain is Extracellular metalloproteinase 5 (MEP5), found in Arthroderma otae (strain ATCC MYA-4605 / CBS 113480) (Microsporum canis).